A 78-amino-acid polypeptide reads, in one-letter code: Beta-defensin 29 (78 aa).

Residues 1 to 23 (MPVTKSYFMTVVVVLILVDETTG) form the signal peptide. Disulfide bonds link C40-C67, C47-C61, and C51-C68.

The protein belongs to the beta-defensin family. As to expression, highly expressed in the cauda epididymis.

It is found in the secreted. Has antibacterial activity. This is Beta-defensin 29 (Defb29) from Mus musculus (Mouse).